Here is a 93-residue protein sequence, read N- to C-terminus: uncharacterized protein (93 aa).

The protein resides in the plastid. Its subcellular location is the chloroplast. This is an uncharacterized protein from Diacronema lutheri (Unicellular marine alga).